A 318-amino-acid polypeptide reads, in one-letter code: Formimidoylglutamase (318 aa).

His-124, Asp-153, His-155, Asp-157, Cys-241, and Asp-243 together coordinate Mn(2+).

The protein belongs to the arginase family. The cofactor is Mn(2+).

It carries out the reaction N-formimidoyl-L-glutamate + H2O = formamide + L-glutamate. Its pathway is amino-acid degradation; L-histidine degradation into L-glutamate; L-glutamate from N-formimidoyl-L-glutamate (hydrolase route): step 1/1. Functionally, catalyzes the conversion of N-formimidoyl-L-glutamate to L-glutamate and formamide. The sequence is that of Formimidoylglutamase from Fusobacterium nucleatum subsp. nucleatum (strain ATCC 25586 / DSM 15643 / BCRC 10681 / CIP 101130 / JCM 8532 / KCTC 2640 / LMG 13131 / VPI 4355).